The primary structure comprises 493 residues: Protein dml1 (493 aa).

The protein belongs to the misato family.

The protein localises to the mitochondrion. Functionally, involved in the partitioning of the mitochondrial organelle and mitochondrial DNA (mtDNA) inheritance. The sequence is that of Protein dml1 (dml1) from Aspergillus oryzae (strain ATCC 42149 / RIB 40) (Yellow koji mold).